The primary structure comprises 210 residues: Urease accessory protein UreF (210 aa).

The protein belongs to the UreF family. In terms of assembly, ureD, UreF and UreG form a complex that acts as a GTP-hydrolysis-dependent molecular chaperone, activating the urease apoprotein by helping to assemble the nickel containing metallocenter of UreC. The UreE protein probably delivers the nickel.

It localises to the cytoplasm. Required for maturation of urease via the functional incorporation of the urease nickel metallocenter. The protein is Urease accessory protein UreF of Dinoroseobacter shibae (strain DSM 16493 / NCIMB 14021 / DFL 12).